A 55-amino-acid polypeptide reads, in one-letter code: Large ribosomal subunit protein bL33 (55 aa).

The protein belongs to the bacterial ribosomal protein bL33 family.

The polypeptide is Large ribosomal subunit protein bL33 (Buchnera aphidicola subsp. Schizaphis graminum (strain Sg)).